Consider the following 321-residue polypeptide: D-alanine--D-alanine ligase (321 aa).

Positions 103–303 (KKILTPENIP…YVALCRMIVE (201 aa)) constitute an ATP-grasp domain. Position 129 to 186 (129 to 186 (PLPRPYVLKPVNEGSSVGVAIIDESFNDGQPIRKDQIDPWKNFKTLLAEPFIKGRELT)) interacts with ATP. The Mg(2+) site is built by Asp254, Glu270, and Asn272.

Belongs to the D-alanine--D-alanine ligase family. Mg(2+) serves as cofactor. It depends on Mn(2+) as a cofactor.

Its subcellular location is the cytoplasm. It catalyses the reaction 2 D-alanine + ATP = D-alanyl-D-alanine + ADP + phosphate + H(+). The protein operates within cell wall biogenesis; peptidoglycan biosynthesis. In terms of biological role, cell wall formation. The sequence is that of D-alanine--D-alanine ligase from Zymomonas mobilis subsp. mobilis (strain ATCC 31821 / ZM4 / CP4).